Reading from the N-terminus, the 240-residue chain is Ribonuclease HII (240 aa).

In terms of domain architecture, RNase H type-2 spans 31 to 222 (RLIAGVDEAG…VRRALGLETA (192 aa)). A divalent metal cation contacts are provided by aspartate 37, glutamate 38, and aspartate 130.

Belongs to the RNase HII family. Mn(2+) is required as a cofactor. It depends on Mg(2+) as a cofactor.

It localises to the cytoplasm. The enzyme catalyses Endonucleolytic cleavage to 5'-phosphomonoester.. In terms of biological role, endonuclease that specifically degrades the RNA of RNA-DNA hybrids. The protein is Ribonuclease HII of Xanthomonas campestris pv. campestris (strain B100).